Here is a 104-residue protein sequence, read N- to C-terminus: Large ribosomal subunit protein uL24 (104 aa).

The protein belongs to the universal ribosomal protein uL24 family. Part of the 50S ribosomal subunit.

One of two assembly initiator proteins, it binds directly to the 5'-end of the 23S rRNA, where it nucleates assembly of the 50S subunit. Functionally, one of the proteins that surrounds the polypeptide exit tunnel on the outside of the subunit. The protein is Large ribosomal subunit protein uL24 of Rhodopseudomonas palustris (strain BisA53).